We begin with the raw amino-acid sequence, 444 residues long: Methylenetetrahydrofolate--tRNA-(uracil-5-)-methyltransferase TrmFO (444 aa).

10–15 serves as a coordination point for FAD; that stretch reads GAGLAG.

Belongs to the MnmG family. TrmFO subfamily. FAD is required as a cofactor.

The protein localises to the cytoplasm. It carries out the reaction uridine(54) in tRNA + (6R)-5,10-methylene-5,6,7,8-tetrahydrofolate + NADH + H(+) = 5-methyluridine(54) in tRNA + (6S)-5,6,7,8-tetrahydrofolate + NAD(+). The enzyme catalyses uridine(54) in tRNA + (6R)-5,10-methylene-5,6,7,8-tetrahydrofolate + NADPH + H(+) = 5-methyluridine(54) in tRNA + (6S)-5,6,7,8-tetrahydrofolate + NADP(+). Catalyzes the folate-dependent formation of 5-methyl-uridine at position 54 (M-5-U54) in all tRNAs. The polypeptide is Methylenetetrahydrofolate--tRNA-(uracil-5-)-methyltransferase TrmFO (Streptococcus pneumoniae serotype 4 (strain ATCC BAA-334 / TIGR4)).